Reading from the N-terminus, the 291-residue chain is Nucleotide-binding protein LGAS_1315 (291 aa).

13 to 20 (GMSGAGKT) provides a ligand contact to ATP. 63-66 (DLRV) is a binding site for GTP.

Belongs to the RapZ-like family.

Its function is as follows. Displays ATPase and GTPase activities. The protein is Nucleotide-binding protein LGAS_1315 of Lactobacillus gasseri (strain ATCC 33323 / DSM 20243 / BCRC 14619 / CIP 102991 / JCM 1131 / KCTC 3163 / NCIMB 11718 / NCTC 13722 / AM63).